Consider the following 365-residue polypeptide: Phosphatidylcholine:ceramide cholinephosphotransferase 2 (365 aa).

Over residues 1-14 (MDIIETAKLEEHLE) the composition is skewed to basic and acidic residues. A disordered region spans residues 1 to 52 (MDIIETAKLEEHLENQPSDPTNTYTRPTEPVEEENKNGNGKPKSLSSGLRKG). Positions 15–26 (NQPSDPTNTYTR) are enriched in polar residues. Helical transmembrane passes span 80-100 (GIAF…ITVV), 128-148 (FSVS…QWLF), 159-179 (FCFI…VTTL), 218-240 (HILC…YLFI), and 248-268 (FWWY…CILV). Residue His229 is part of the active site. Active-site residues include His272 and Asp276. Residues 273–290 (YTVDVIIAYYITTRLFWW) traverse the membrane as a helical segment. The Cytoplasmic segment spans residues 291–365 (YHSMANEKNL…KIGEDNEKST (75 aa)). S-palmitoyl cysteine attachment occurs at residues Cys331, Cys332, Cys343, and Cys348.

The protein belongs to the sphingomyelin synthase family. In terms of processing, palmitoylated on Cys-331, Cys-332, Cys-343 and Cys-348; which plays an important role in plasma membrane localization.

It is found in the cell membrane. The protein resides in the golgi apparatus membrane. The catalysed reaction is an N-acylsphing-4-enine + a 1,2-diacyl-sn-glycero-3-phosphocholine = a sphingomyelin + a 1,2-diacyl-sn-glycerol. The enzyme catalyses an N-acylsphinganine + a 1,2-diacyl-sn-glycero-3-phosphocholine = an N-acylsphinganine-1-phosphocholine + a 1,2-diacyl-sn-glycerol. It carries out the reaction an N-acyl-(4R)-4-hydroxysphinganine + a 1,2-diacyl-sn-glycero-3-phosphocholine = an N-acyl-(4R)-4-hydroxysphinganine-phosphocholine + a 1,2-diacyl-sn-glycerol. It catalyses the reaction an N-acylsphing-4-enine + a 1,2-diacyl-sn-glycero-3-phosphoethanolamine = an N-acylsphing-4-enine 1-phosphoethanolamine + a 1,2-diacyl-sn-glycerol. The catalysed reaction is an N-acylsphinganine + a 1,2-diacyl-sn-glycero-3-phosphoethanolamine = an N-acylsphinganine-1-phosphoethanolamine + a 1,2-diacyl-sn-glycerol. The enzyme catalyses an N-acyl-(4R)-4-hydroxysphinganine + a 1,2-diacyl-sn-glycero-3-phosphoethanolamine = an N-acyl-(4R)-4-hydroxysphinganine-1-phosphoethanolamine + a 1,2-diacyl-sn-glycerol. It carries out the reaction 1,2-dihexadecanoyl-sn-glycero-3-phosphocholine + an N-acylsphing-4-enine = 1,2-dihexadecanoyl-sn-glycerol + a sphingomyelin. It catalyses the reaction 1-(9Z-octadecenoyl)-2-acyl-sn-3-glycerol + a sphingomyelin = a 1-(9Z-octadecenoyl)-2-acyl-sn-glycero-3-phosphocholine + an N-acylsphing-4-enine. The catalysed reaction is N-hexadecanoylsphinganine + a 1,2-diacyl-sn-glycero-3-phosphocholine = N-hexadecanoyl-sphinganine-1-phosphocholine + a 1,2-diacyl-sn-glycerol. The enzyme catalyses N-hexadecanoyl-(4R)-hydroxysphinganine + a 1,2-diacyl-sn-glycero-3-phosphocholine = N-hexadecanoyl-(4R)-hydroxysphinganine-phosphocholine + a 1,2-diacyl-sn-glycerol. It carries out the reaction N-hexadecanoylsphinganine + a 1,2-diacyl-sn-glycero-3-phosphoethanolamine = N-hexadecanoyl-sphinganine-1-phosphoethanolamine + a 1,2-diacyl-sn-glycerol. It catalyses the reaction N-hexadecanoyl-(4R)-hydroxysphinganine + a 1,2-diacyl-sn-glycero-3-phosphoethanolamine = N-hexadecanoyl-(4R)-hydroxysphinganine-1-phosphoethanolamine + a 1,2-diacyl-sn-glycerol. It functions in the pathway sphingolipid metabolism. Sphingomyelin synthase that primarily contributes to sphingomyelin synthesis and homeostasis at the plasma membrane. Catalyzes the reversible transfer of phosphocholine moiety in sphingomyelin biosynthesis: in the forward reaction transfers phosphocholine head group of phosphatidylcholine (PC) on to ceramide (CER) to form ceramide phosphocholine (sphingomyelin, SM) and diacylglycerol (DAG) as by-product, and in the reverse reaction transfers phosphocholine from SM to DAG to form PC and CER. The direction of the reaction appears to depend on the levels of CER and DAG in the plasma membrane. Does not use free phosphorylcholine or CDP-choline as donors. Can also transfer phosphoethanolamine head group of phosphatidylethanolamine (PE) on to ceramide (CER) to form ceramide phosphoethanolamine (CPE). Regulates receptor-mediated signal transduction via mitogenic DAG and proapoptotic CER, as well as via SM, a structural component of membrane rafts that serve as platforms for signal transduction and protein sorting. To a lesser extent, plays a role in secretory transport via regulation of DAG pool at the Golgi apparatus and its downstream effects on PRKD1. Required for normal bone matrix mineralization. The polypeptide is Phosphatidylcholine:ceramide cholinephosphotransferase 2 (SGMS2) (Macaca fascicularis (Crab-eating macaque)).